The sequence spans 813 residues: Microtubule-associated protein 6 (813 aa).

3 S-palmitoyl cysteine lipidation sites follow: cysteine 5, cysteine 10, and cysteine 11. Disordered stretches follow at residues 36–283 (ATEH…AAAD), 314–651 (VKPI…KDES), and 756–813 (PLKD…ESSP). Residues 41–50 (GAPPQPPPPQ) show a composition bias toward pro residues. The segment covering 51–62 (QQAQPALAPPSA) has biased composition (low complexity). The span at 100-112 (GRSGPGPGLGSGS) shows a compositional bias: gly residues. At serine 102 the chain carries Phosphoserine. Residues 118–141 (DSVMRQDYRAWKVQRPEPSCRPRS) are mn 1. The segment covering 121–141 (MRQDYRAWKVQRPEPSCRPRS) has biased composition (basic and acidic residues). Residues 126–140 (RAWKVQRPEPSCRPR) form a calmodulin-binding region. Tyrosine 143 is subject to Phosphotyrosine. The segment covering 149 to 173 (PFERETQYQKDFRAWPLPRRGDHPW) has biased composition (basic and acidic residues). A mn 2 region spans residues 153-176 (ETQYQKDFRAWPLPRRGDHPWIPK). The segment at 162–176 (AWPLPRRGDHPWIPK) is calmodulin-binding. Phosphoserine is present on serine 187. 4 calmodulin-binding regions span residues 189 to 203 (PILGAPKRRPQSQER), 306 to 320 (RAWTDIKPVKPIKAK), 357 to 371 (RRRIRSLYSEPFKEP), and 384 to 398 (PKKTSASHKPTRKAK). A mn 3 region spans residues 298–321 (SSSYRNEFRAWTDIKPVKPIKAKP). Residues 367–376 (PFKEPPKVEK) show a composition bias toward basic and acidic residues. Residues 383-398 (KPKKTSASHKPTRKAK) are compositionally biased toward basic residues. Basic and acidic residues predominate over residues 420–439 (KPDDKEQSKEMNNKLAEAKE). Positions 443 to 454 (QPVSDSSKTQGP) are enriched in polar residues. Residues 637-651 (KDQDPMVPEHPKDES) show a composition bias toward basic and acidic residues. Serine 812 bears the Phosphoserine mark.

It belongs to the STOP family. In terms of assembly, interacts with calmodulin (via C-terminus); the interaction is dependent on Ca(2+). Interacts (via C-terminus) with TMEM106B (via N-terminus). Interacts with ZDHHC17 (via ANK repeats). Interacts with ZDHHC13 (via ANK repeats). Post-translationally, palmitoylated. Probably depalmitoylated by ABHD17A, ABHD17B and ABHD17C. During neuronal polarization, palmitoylation and depalmitoylation cycles regulate MAP6 shuttling between secretory vesicles and microtubules, and its polarized distribution in the axon. Expressed in brain (at protein level). Expressed in spinal cord. Isoform 2 expression is up-regulated in the prefrontal cortex (Brodmann's area 46) of patients with schizophrenia (postmortem brain study).

It is found in the cytoplasm. Its subcellular location is the cytoskeleton. The protein resides in the golgi apparatus. The protein localises to the cell projection. It localises to the axon. It is found in the dendrite. Its subcellular location is the cytoplasmic vesicle. The protein resides in the secretory vesicle membrane. Functionally, involved in microtubule stabilization in many cell types, including neuronal cells. Specifically has microtubule cold stabilizing activity. Involved in dendrite morphogenesis and maintenance by regulating lysosomal trafficking via its interaction with TMEM106B. Regulates KIF5A-mediated axonal cargo transport. Regulates axonal growth during neuron polarization. In Homo sapiens (Human), this protein is Microtubule-associated protein 6 (MAP6).